We begin with the raw amino-acid sequence, 130 residues long: NADH-quinone oxidoreductase subunit A (130 aa).

A run of 3 helical transmembrane segments spans residues 17 to 37, 74 to 94, and 99 to 119; these read YIFV…MLAL, LVGI…PWAV, and LGPA…VGFV.

This sequence belongs to the complex I subunit 3 family. NDH-1 is composed of 14 different subunits. Subunits NuoA, H, J, K, L, M, N constitute the membrane sector of the complex.

It is found in the cell inner membrane. It catalyses the reaction a quinone + NADH + 5 H(+)(in) = a quinol + NAD(+) + 4 H(+)(out). NDH-1 shuttles electrons from NADH, via FMN and iron-sulfur (Fe-S) centers, to quinones in the respiratory chain. The immediate electron acceptor for the enzyme in this species is believed to be ubiquinone. Couples the redox reaction to proton translocation (for every two electrons transferred, four hydrogen ions are translocated across the cytoplasmic membrane), and thus conserves the redox energy in a proton gradient. This is NADH-quinone oxidoreductase subunit A from Neorickettsia sennetsu (strain ATCC VR-367 / Miyayama) (Ehrlichia sennetsu).